Here is a 448-residue protein sequence, read N- to C-terminus: Glucose-6-phosphate isomerase (448 aa).

Residue Glu-290 is the Proton donor of the active site. Residues His-311 and Lys-425 contribute to the active site.

This sequence belongs to the GPI family.

The protein localises to the cytoplasm. The enzyme catalyses alpha-D-glucose 6-phosphate = beta-D-fructose 6-phosphate. It functions in the pathway carbohydrate biosynthesis; gluconeogenesis. It participates in carbohydrate degradation; glycolysis; D-glyceraldehyde 3-phosphate and glycerone phosphate from D-glucose: step 2/4. Functionally, catalyzes the reversible isomerization of glucose-6-phosphate to fructose-6-phosphate. The protein is Glucose-6-phosphate isomerase of Acetivibrio thermocellus (strain ATCC 27405 / DSM 1237 / JCM 9322 / NBRC 103400 / NCIMB 10682 / NRRL B-4536 / VPI 7372) (Clostridium thermocellum).